The chain runs to 179 residues: Large ribosomal subunit protein uL5 (179 aa).

Belongs to the universal ribosomal protein uL5 family. As to quaternary structure, part of the 50S ribosomal subunit; part of the 5S rRNA/L5/L18/L25 subcomplex. Contacts the 5S rRNA and the P site tRNA. Forms a bridge to the 30S subunit in the 70S ribosome.

Its function is as follows. This is one of the proteins that bind and probably mediate the attachment of the 5S RNA into the large ribosomal subunit, where it forms part of the central protuberance. In the 70S ribosome it contacts protein S13 of the 30S subunit (bridge B1b), connecting the 2 subunits; this bridge is implicated in subunit movement. Contacts the P site tRNA; the 5S rRNA and some of its associated proteins might help stabilize positioning of ribosome-bound tRNAs. This is Large ribosomal subunit protein uL5 from Staphylococcus epidermidis (strain ATCC 35984 / DSM 28319 / BCRC 17069 / CCUG 31568 / BM 3577 / RP62A).